Reading from the N-terminus, the 87-residue chain is Small ribosomal subunit protein bS20 (87 aa).

It belongs to the bacterial ribosomal protein bS20 family.

In terms of biological role, binds directly to 16S ribosomal RNA. The sequence is that of Small ribosomal subunit protein bS20 from Rhizorhabdus wittichii (strain DSM 6014 / CCUG 31198 / JCM 15750 / NBRC 105917 / EY 4224 / RW1) (Sphingomonas wittichii).